The following is a 178-amino-acid chain: Large ribosomal subunit protein uL6 (178 aa).

The protein belongs to the universal ribosomal protein uL6 family. Part of the 50S ribosomal subunit.

In terms of biological role, this protein binds to the 23S rRNA, and is important in its secondary structure. It is located near the subunit interface in the base of the L7/L12 stalk, and near the tRNA binding site of the peptidyltransferase center. This is Large ribosomal subunit protein uL6 from Helicobacter pylori (strain P12).